A 500-amino-acid chain; its full sequence is Histidine ammonia-lyase (500 aa).

The segment at residues 142-144 is a cross-link (5-imidazolinone (Ala-Gly)); it reads ASG. 2,3-didehydroalanine (Ser) is present on Ser-143.

The protein belongs to the PAL/histidase family. Contains an active site 4-methylidene-imidazol-5-one (MIO), which is formed autocatalytically by cyclization and dehydration of residues Ala-Ser-Gly.

It is found in the cytoplasm. It catalyses the reaction L-histidine = trans-urocanate + NH4(+). The protein operates within amino-acid degradation; L-histidine degradation into L-glutamate; N-formimidoyl-L-glutamate from L-histidine: step 1/3. The protein is Histidine ammonia-lyase of Macrococcus caseolyticus (strain JCSC5402) (Macrococcoides caseolyticum).